The following is a 426-amino-acid chain: Histidine--tRNA ligase (426 aa).

The protein belongs to the class-II aminoacyl-tRNA synthetase family. Homodimer.

The protein resides in the cytoplasm. It carries out the reaction tRNA(His) + L-histidine + ATP = L-histidyl-tRNA(His) + AMP + diphosphate + H(+). The polypeptide is Histidine--tRNA ligase (Malacoplasma penetrans (strain HF-2) (Mycoplasma penetrans)).